A 75-amino-acid polypeptide reads, in one-letter code: UPF0352 protein VSAL_I1058 (75 aa).

Belongs to the UPF0352 family.

This chain is UPF0352 protein VSAL_I1058, found in Aliivibrio salmonicida (strain LFI1238) (Vibrio salmonicida (strain LFI1238)).